The following is an 876-amino-acid chain: Protein argonaute 17 (876 aa).

In terms of domain architecture, PAZ spans 246–338 (PVVDYVAQLL…LPLEVCKIAE (93 aa)). One can recognise a Piwi domain in the interval 514–834 (LLIVILPNNN…LSSRARCYIK (321 aa)). Residues 839 to 859 (GDSTSHTSLPSEEDSSAASET) are disordered.

Belongs to the argonaute family. Ago subfamily.

Its function is as follows. Probably involved in the RNA silencing pathway. May bind to short RNAs such as microRNAs (miRNAs) or short interfering RNAs (siRNAs), and represses the translation of mRNAs which are complementary to them. The sequence is that of Protein argonaute 17 (AGO17) from Oryza sativa subsp. japonica (Rice).